The chain runs to 148 residues: Large ribosomal subunit protein bL9 (148 aa).

It belongs to the bacterial ribosomal protein bL9 family.

Functionally, binds to the 23S rRNA. The protein is Large ribosomal subunit protein bL9 of Desulfatibacillum aliphaticivorans.